The following is a 119-amino-acid chain: Holo-[acyl-carrier-protein] synthase (119 aa).

2 residues coordinate Mg(2+): aspartate 8 and glutamate 59.

Belongs to the P-Pant transferase superfamily. AcpS family. The cofactor is Mg(2+).

It is found in the cytoplasm. The enzyme catalyses apo-[ACP] + CoA = holo-[ACP] + adenosine 3',5'-bisphosphate + H(+). Its function is as follows. Transfers the 4'-phosphopantetheine moiety from coenzyme A to a Ser of acyl-carrier-protein. The polypeptide is Holo-[acyl-carrier-protein] synthase (Lactococcus lactis subsp. cremoris (strain SK11)).